The sequence spans 380 residues: Probable protein phosphatase 2C 27 (380 aa).

Positions 84 to 344 (RSGSCAEQGA…DNLTVIVVCF (261 aa)) constitute a PPM-type phosphatase domain. Residues D128, G129, D292, and D335 each contribute to the Mn(2+) site.

It belongs to the PP2C family. Mg(2+) is required as a cofactor. The cofactor is Mn(2+). As to expression, expressed in roots, leaves, stems, flower, and trichomes.

It localises to the nucleus. The protein resides in the cytoplasm. It catalyses the reaction O-phospho-L-seryl-[protein] + H2O = L-seryl-[protein] + phosphate. The enzyme catalyses O-phospho-L-threonyl-[protein] + H2O = L-threonyl-[protein] + phosphate. Its function is as follows. Confers salt tolerance by triggering the expression of stress-responsive genes. This chain is Probable protein phosphatase 2C 27, found in Arabidopsis thaliana (Mouse-ear cress).